The chain runs to 243 residues: ATP synthase subunit a, chloroplastic (243 aa).

The next 5 helical transmembrane spans lie at 32–52 (AQVL…ALIA), 91–111 (IPFV…GALI), 130–150 (INTT…AGLN), 195–215 (LVVA…MMFL), and 216–236 (GLFT…AYIG).

The protein belongs to the ATPase A chain family. As to quaternary structure, F-type ATPases have 2 components, CF(1) - the catalytic core - and CF(0) - the membrane proton channel. CF(1) has five subunits: alpha(3), beta(3), gamma(1), delta(1), epsilon(1). CF(0) has four main subunits: a, b, b' and c.

The protein resides in the plastid. It localises to the chloroplast thylakoid membrane. Functionally, key component of the proton channel; it plays a direct role in the translocation of protons across the membrane. The polypeptide is ATP synthase subunit a, chloroplastic (Chaetosphaeridium globosum (Charophycean green alga)).